Consider the following 243-residue polypeptide: Protein S40-7 (243 aa).

Disordered stretches follow at residues 1–68 and 107–143; these read MNKN…KSGL and SSTA…ERLP. The segment covering 10–20 has biased composition (polar residues); sequence SSPSSLATISD. The segment covering 22–32 has biased composition (acidic residues); that stretch reads ADGELNEDDIF. Over residues 47-67 the composition is skewed to polar residues; that stretch reads PVSSPAKQQTPARQLQRSKSG.

The protein belongs to the senescence regulator S40 family.

The protein resides in the cytoplasm. The protein is Protein S40-7 of Arabidopsis thaliana (Mouse-ear cress).